Consider the following 460-residue polypeptide: Phosphoglucomutase (460 aa).

S103 (phosphoserine intermediate) is an active-site residue. S103 provides a ligand contact to Mg(2+). Substrate-binding positions include 103–104 (SH) and K113. The Mg(2+) site is built by D239, D241, and D243. Substrate contacts are provided by residues 243–244 (DR), T303, and 322–324 (EMS).

Belongs to the phosphohexose mutase family. Requires Mg(2+) as cofactor.

The protein resides in the cytoplasm. It catalyses the reaction alpha-D-glucose 1-phosphate = alpha-D-glucose 6-phosphate. In terms of biological role, this enzyme participates in both the breakdown and synthesis of glucose. This is Phosphoglucomutase (pgm) from Neisseria gonorrhoeae.